Reading from the N-terminus, the 305-residue chain is Mitochondrial uncoupling protein 2 (305 aa).

3 Solcar repeats span residues isoleucine 10–leucine 104, isoleucine 114–threonine 205, and aspartate 214–valine 297. 6 helical membrane passes run phenylalanine 16–alanine 36, isoleucine 73–leucine 93, isoleucine 120–valine 140, threonine 179–tyrosine 199, leucine 220–valine 240, and tyrosine 270–threonine 290.

It belongs to the mitochondrial carrier (TC 2.A.29) family.

The protein resides in the mitochondrion inner membrane. Its function is as follows. PUMPS are mitochondrial transporter proteins that create proton leaks across the inner mitochondrial membrane, thus uncoupling oxidative phosphorylation. This leads to a decrease in the efficiency of oxidative phosphorylation and an increase in heat production. May be involved in protecting plant cells against oxidative stress damage. The chain is Mitochondrial uncoupling protein 2 (PUMP2) from Arabidopsis thaliana (Mouse-ear cress).